The sequence spans 105 residues: uncharacterized protein (105 aa).

A helical transmembrane segment spans residues Asn29 to Ile49.

The protein resides in the membrane. This is an uncharacterized protein from Saccharomyces cerevisiae (strain ATCC 204508 / S288c) (Baker's yeast).